Reading from the N-terminus, the 587-residue chain is Arginine--tRNA ligase (587 aa).

The 'HIGH' region signature appears at 126-136 (ANPTGPLHVGH).

Belongs to the class-I aminoacyl-tRNA synthetase family. As to quaternary structure, monomer.

Its subcellular location is the cytoplasm. The catalysed reaction is tRNA(Arg) + L-arginine + ATP = L-arginyl-tRNA(Arg) + AMP + diphosphate. The chain is Arginine--tRNA ligase from Azoarcus sp. (strain BH72).